The primary structure comprises 864 residues: E3 ubiquitin-protein ligase Itchy (864 aa).

One can recognise a C2 domain in the interval methionine 1–glutamate 115. The residue at position 2 (serine 2) is an N-acetylserine. Over residues asparagine 151 to aspartate 164 the composition is skewed to polar residues. The disordered stretch occupies residues asparagine 151 to glutamate 294. The span at aspartate 165–arginine 174 shows a compositional bias: basic and acidic residues. Residues asparagine 195–glycine 206 are compositionally biased toward low complexity. Serine 199 bears the Phosphoserine; by MAPK8 mark. Residues serine 210 to arginine 224 are compositionally biased toward pro residues. Threonine 222 is modified (phosphothreonine; by MAPK8). Positions asparagine 230–serine 259 are enriched in low complexity. At serine 232 the chain carries Phosphoserine; by MAPK8. WW domains follow at residues alanine 287 to proline 320 and glutamate 319 to leucine 352. Threonine 346 carries the post-translational modification Phosphothreonine; by SGK3. Residues arginine 356–serine 432 form a required for interaction with FYN region. Phosphotyrosine; by FYN is present on tyrosine 381. WW domains are found at residues glycine 399–serine 432 and lysine 439–threonine 472. Serine 411 carries the phosphoserine; by SGK3 modification. The HECT domain occupies serine 530–glutamate 864. An MAP kinase docking site region spans residues arginine 535–glycine 544. Catalysis depends on cysteine 832, which acts as the Glycyl thioester intermediate.

As to quaternary structure, monomer. Part of a ternary complex composed of SMAD3, ITCH/AIP4 and NEDD9/HEF1; within the complex NEDD9/HEF1 interacts (via N-terminus) with ITCH/AIP4 (via WW domains); the complex mediates ubiquitination and proteasomal degradation of NEDD9/HEF1. Interacts (via WW domains) with OCNL. Interacts (via WW domains) with NOTCH1. Interacts (via WW domains) JUN. Interacts with JUNB; the interaction promotes ITCH-mediated ubiquitination and degradation of JUNB. Interacts with FYN; the interaction phosphorylates ITCH on Tyr-381 decreasing binding of JUNB. Interacts (via WW domain 2) with N4BP1; the interaction inhibits the E3 ubiquitin-protein ligase activity. Interacts with NDFIP1 and NDFIP2; the interaction with NDFIP proteins activates the E3 ubiquitin-protein ligase and may induce its recruitment to exosomes. Interacts with ARHGEF7. Interacts with RNF11. Interacts (via the WW 1 domain) with NFE2 (via the PXY motif 1); the interaction promotes 'Lys-63'-linked ubiquitination of NFE2, retains it in the cytoplasm and prevents its transactivation activity. Interacts (via WW domains) with CXCR4 (via C-terminus); the interaction depends on CXCR4 phosphorylation. Found in a complex with E3 ligase DTX3L and ESCRT-0 components HGS and STAM. Interacts with DTX3L (via C-terminus); the interaction is increased upon CXCL12 stimulation and inhibits ITCH catalytic activity (the interaction is direct). Interacts with HGS. Interacts (via WW domains) with PCBP2 within a complex containing ITCH, MAVS and PCBP2. Interacts (via WW domains) with TXNIP (via C-terminus). Interacts with p15 BID. Interacts with ERBB4. Interacts with DTX1. Interacts with SPART. Interacts with SNX9 and SNX18. Interacts (via its WW domains) with ATN1. Interacts (via WW domains) with SGK3. Interacts with CBLC. Interacts with OTUD7B. Interacts (via WW domain 1,2 and 3) with PI4K2A; the interaction inhibits PI4K2A catalytic activity and promotes ITCH catalytic activity. Interacts with ARRDC4. Part of a complex containing ITCH, NDFIP1 and MAP3K7. Interacts with UBE2L3; the interaction is mediated by NDFIP1. Interacts with MAPK8/JNK1. Interacts (via WW domains) with ARRDC1 (via PPxY motifs); the interaction is direct and participates in the recruitment of the ubiquitin-protein ligase ITCH to the NOTCH1 receptor. Interacts (via WW domains) with ARRDC2. Interacts (via WW domains) with ARRDC3. Interacts directly with LDLRAD3; this interaction promotes ITCH auto-ubiquitination leading to its degradation. Interacts with ENTREP1; enhances the ubiquitination of CXCR4 by ITCH and its subsequent endocytosis. Interacts with USP12 and WDR48/UAF1; the interaction is more efficient when both USP12 and WDR48/UAF1 are involved and may facilitate the recruitment of the USP12 deubiquitinase complex to Notch. In terms of assembly, (Microbial infection) Interacts with Epstein-Barr virus LMP2A. In terms of processing, on T-cell activation, phosphorylation by the JNK cascade on serine and threonine residues surrounding the PRR domain accelerates the ubiquitination and degradation of JUN and JUNB. The increased ITCH catalytic activity due to phosphorylation by JNK1 may occur due to a conformational change disrupting the interaction between the PRR/WW motifs domain and the HECT domain and, thus exposing the HECT domain. Phosphorylation by FYN reduces interaction with JUNB and negatively controls JUN ubiquitination and degradation. Interacts directly with LDLRAD3; this interaction promotes ITCH auto-ubiquitination leading to its degradation. Monoubiquitinated. Autopolyubiquitinated with 'Lys-63' linkages which does not lead to protein degradation. In terms of tissue distribution, detected in uterus (at protein level). Widely expressed.

The protein resides in the cell membrane. It localises to the cytoplasm. Its subcellular location is the nucleus. The protein localises to the early endosome membrane. It is found in the endosome membrane. It carries out the reaction S-ubiquitinyl-[E2 ubiquitin-conjugating enzyme]-L-cysteine + [acceptor protein]-L-lysine = [E2 ubiquitin-conjugating enzyme]-L-cysteine + N(6)-ubiquitinyl-[acceptor protein]-L-lysine.. It participates in protein modification; protein ubiquitination. With respect to regulation, activated by NDFIP1- and NDFIP2-binding. Activated by PI4K2A-binding. Inhibited by DTX3L-binding. Inhibited by N4BP1 binding. Functionally, acts as an E3 ubiquitin-protein ligase which accepts ubiquitin from an E2 ubiquitin-conjugating enzyme in the form of a thioester and then directly transfers the ubiquitin to targeted substrates. It catalyzes 'Lys-29'-, 'Lys-48'- and 'Lys-63'-linked ubiquitin conjugation. Involved in the control of inflammatory signaling pathways. Is an essential component of a ubiquitin-editing protein complex, comprising also TNFAIP3, TAX1BP1 and RNF11, that ensures the transient nature of inflammatory signaling pathways. Promotes the association of the complex after TNF stimulation. Once the complex is formed, TNFAIP3 deubiquitinates 'Lys-63' polyubiquitin chains on RIPK1 and catalyzes the formation of 'Lys-48'-polyubiquitin chains. This leads to RIPK1 proteasomal degradation and consequently termination of the TNF- or LPS-mediated activation of NFKB1. Ubiquitinates RIPK2 by 'Lys-63'-linked conjugation and influences NOD2-dependent signal transduction pathways. Regulates the transcriptional activity of several transcription factors involved in immune response. Ubiquitinates NFE2 by 'Lys-63' linkages and is implicated in the control of the development of hematopoietic lineages. Mediates JUN ubiquitination and degradation. Mediates JUNB ubiquitination and degradation. Critical regulator of type 2 helper T (Th2) cell cytokine production by inducing JUNB ubiquitination and degradation. Involved in the negative regulation of MAVS-dependent cellular antiviral responses. Ubiquitinates MAVS through 'Lys-48'-linked conjugation resulting in MAVS proteasomal degradation. Following ligand stimulation, regulates sorting of Wnt receptor FZD4 to the degradative endocytic pathway probably by modulating PI42KA activity. Ubiquitinates PI4K2A and negatively regulates its catalytic activity. Ubiquitinates chemokine receptor CXCR4 and regulates sorting of CXCR4 to the degradative endocytic pathway following ligand stimulation by ubiquitinating endosomal sorting complex required for transport ESCRT-0 components HGS and STAM. Targets DTX1 for lysosomal degradation and controls NOTCH1 degradation, in the absence of ligand, through 'Lys-29'-linked polyubiquitination. Ubiquitinates SNX9. Ubiquitinates MAP3K7 through 'Lys-48'-linked conjugation. Together with UBR5, involved in the regulation of apoptosis and reactive oxygen species levels through the ubiquitination and proteasomal degradation of TXNIP: catalyzes 'Lys-48'-/'Lys-63'-branched ubiquitination of TXNIP. ITCH synthesizes 'Lys-63'-linked chains, while UBR5 is branching multiple 'Lys-48'-linked chains of substrate initially modified. Mediates the antiapoptotic activity of epidermal growth factor through the ubiquitination and proteasomal degradation of p15 BID. Ubiquitinates BRAT1 and this ubiquitination is enhanced in the presence of NDFIP1. Ubiquitinates NEDD9/HEF1, resulting in proteasomal degradation of NEDD9/HEF1. The polypeptide is E3 ubiquitin-protein ligase Itchy (Itch) (Mus musculus (Mouse)).